The following is a 445-amino-acid chain: C-terminal-binding protein 2 (445 aa).

At Arg-22 the chain carries Asymmetric dimethylarginine. NAD(+) is bound by residues Ser-106, 186–191 (IGFGRT), Asp-210, 243–249 (CNLNEHN), 270–272 (AAR), and Asp-296. Residue Arg-272 is part of the active site. Glu-301 is a catalytic residue. Catalysis depends on His-321, which acts as the Proton donor. Position 321-324 (321-324 (HTAW)) interacts with NAD(+). Residues 414 to 445 (THNLPTVAHPSQAPSPNQPTKHGDNREHPNEQ) form a disordered region. A Phosphoserine modification is found at Ser-428. A compositionally biased stretch (basic and acidic residues) spans 434 to 445 (KHGDNREHPNEQ).

It belongs to the D-isomer specific 2-hydroxyacid dehydrogenase family. As to quaternary structure, can form homodimers or heterodimers of CTBP1 and CTBP2. Interacts with HIPK2 and ZNF217. Interacts with PRDM16; represses white adipose tissue (WAT)-specific genes expression. Interacts with PNN, NRIP1 and WIZ. Interacts with MCRIP1. (Microbial infection) Interacts with human adenovirus 5 E1A protein; this interaction seems to potentiate viral replication. In terms of tissue distribution, ubiquitous. Highest levels in heart, skeletal muscle, and pancreas.

The protein localises to the nucleus. It is found in the synapse. Corepressor targeting diverse transcription regulators. Functions in brown adipose tissue (BAT) differentiation. Its function is as follows. Isoform 2 probably acts as a scaffold for specialized synapses. This chain is C-terminal-binding protein 2 (CTBP2), found in Homo sapiens (Human).